Reading from the N-terminus, the 300-residue chain is ATP-dependent (S)-NAD(P)H-hydrate dehydratase (300 aa).

The YjeF C-terminal domain occupies 6-297 (YAGKIKEFIP…GCIHQSFTSL (292 aa)). Residues glycine 106 and 158-164 (NEVEFKR) contribute to the (6S)-NADPHX site. ATP is bound by residues 188-192 (KGSTD) and 218-227 (GSNRRCGGQG). Aspartate 228 is a (6S)-NADPHX binding site.

This sequence belongs to the NnrD/CARKD family. The cofactor is Mg(2+).

It catalyses the reaction (6S)-NADHX + ATP = ADP + phosphate + NADH + H(+). It carries out the reaction (6S)-NADPHX + ATP = ADP + phosphate + NADPH + H(+). Catalyzes the dehydration of the S-form of NAD(P)HX at the expense of ATP, which is converted to ADP. Together with NAD(P)HX epimerase, which catalyzes the epimerization of the S- and R-forms, the enzyme allows the repair of both epimers of NAD(P)HX, a damaged form of NAD(P)H that is a result of enzymatic or heat-dependent hydration. This chain is ATP-dependent (S)-NAD(P)H-hydrate dehydratase, found in Pediculus humanus subsp. corporis (Body louse).